Reading from the N-terminus, the 336-residue chain is GTPase Obg (336 aa).

The region spanning 1-159 (MKFLDQAKIY…RWVWLRLKLI (159 aa)) is the Obg domain. Positions 160-328 (ADIGLVGLPN…LLRLLQDRVT (169 aa)) constitute an OBG-type G domain. Residues 166 to 173 (GLPNAGKS), 191 to 195 (FTTLH), 213 to 216 (DIPG), 280 to 283 (NKCD), and 309 to 311 (SGA) each bind GTP. Positions 173 and 193 each coordinate Mg(2+).

It belongs to the TRAFAC class OBG-HflX-like GTPase superfamily. OBG GTPase family. Monomer. It depends on Mg(2+) as a cofactor.

The protein localises to the cytoplasm. An essential GTPase which binds GTP, GDP and possibly (p)ppGpp with moderate affinity, with high nucleotide exchange rates and a fairly low GTP hydrolysis rate. Plays a role in control of the cell cycle, stress response, ribosome biogenesis and in those bacteria that undergo differentiation, in morphogenesis control. The protein is GTPase Obg of Gluconobacter oxydans (strain 621H) (Gluconobacter suboxydans).